The chain runs to 364 residues: Protein FAM81A (364 aa).

A coiled-coil region spans residues 80–107 (IRNITAIVKQLNRDIEVLQEQIRARDNI). The segment covering 275-300 (ARLDKIEESQRRNAEGQRKPEEEKVH) has biased composition (basic and acidic residues). Positions 275–301 (ARLDKIEESQRRNAEGQRKPEEEKVHG) are disordered.

The protein belongs to the FAM81 family. In terms of assembly, interacts with DLG4/PSD-95, GRIN2B/GLUN2B and SYNGAP1; the interactions facilitate condensate formation. As to expression, highly expressed in brain (at protein level).

It localises to the postsynaptic density. The protein localises to the cytoplasm. Functionally, facilitates the interaction and assembly of proteins within the postsynaptic density by promoting the condensation of postsynaptic proteins via liquid-liquid phase separation. Required for neuronal activity. Accumulation at the postsynaptic density results in enlargement of dendritic spines. The polypeptide is Protein FAM81A (Rattus norvegicus (Rat)).